Here is a 117-residue protein sequence, read N- to C-terminus: Large ribosomal subunit protein eL34 (117 aa).

This sequence belongs to the eukaryotic ribosomal protein eL34 family. As to quaternary structure, component of the large ribosomal subunit.

It localises to the cytoplasm. The protein localises to the cytosol. The protein resides in the endoplasmic reticulum. Its function is as follows. Component of the large ribosomal subunit. The ribosome is a large ribonucleoprotein complex responsible for the synthesis of proteins in the cell. The polypeptide is Large ribosomal subunit protein eL34 (rpl34) (Ictalurus punctatus (Channel catfish)).